A 586-amino-acid chain; its full sequence is Solute carrier family 13 member 2 (586 aa).

The next 3 membrane-spanning stretches (helical) occupy residues 13-33 (SYLI…IVQT), 53-73 (ALPL…MGIM), and 86-106 (TNIL…WNLH). Over residues 165–175 (DVEEGNSNPSF) the composition is skewed to polar residues. Positions 165–209 (DVEEGNSNPSFELQEASPQKEETKLDNGQAVSVSSEPRAQKTKEH) are disordered. The next 9 membrane-spanning stretches (helical) occupy residues 215-235 (GLSL…LTGT), 264-284 (FAFP…QVLF), 319-339 (PMSF…VLWF), 366-386 (GTVA…IPGL), 407-427 (TVND…FALA), 445-465 (PLQH…VAIF), 478-498 (FLPI…YVML), 506-526 (LAFM…FGGL), and 535-555 (GFLL…SWSI).

The protein belongs to the SLC13A/DASS transporter (TC 2.A.47) family. NADC subfamily. As to expression, highly expressed in kidney and small intestine. Not detectable in brain, heart, stomach and skeletal muscle.

It is found in the apical cell membrane. It catalyses the reaction succinate(out) + 3 Na(+)(out) = succinate(in) + 3 Na(+)(in). The catalysed reaction is fumarate(out) + 3 Na(+)(out) = fumarate(in) + 3 Na(+)(in). It carries out the reaction 2-oxoglutarate(out) + 3 Na(+)(out) = 2-oxoglutarate(in) + 3 Na(+)(in). Li(+) decreases succinate transport in the presence of Na(+), by competing at one of the three cation binding sites. Low-affinity sodium-dicarboxylate cotransporter, that mediates the entry of citric acid cycle intermediates, such as succinate, citrate, fumarate and alpha-ketoglutarate (2-oxoglutarate) into the small intestine and renal proximal tubule. Can transport citrate in a Na(+)-dependent manner, recognizing the divalent form of citrate rather than the trivalent form which is normally found in blood. Transports the dicarboxylate into the cell with a probable stoichiometry of 3 Na(+) for 1 divalent dicarboxylate, rendering the process electrogenic. Has a critical role in renal dicarboxylate transport. The chain is Solute carrier family 13 member 2 (Slc13a2) from Mus musculus (Mouse).